Consider the following 238-residue polypeptide: Probable septum site-determining protein MinC (238 aa).

It belongs to the MinC family. Interacts with MinD and FtsZ.

In terms of biological role, cell division inhibitor that blocks the formation of polar Z ring septums. Rapidly oscillates between the poles of the cell to destabilize FtsZ filaments that have formed before they mature into polar Z rings. Prevents FtsZ polymerization. This Aeromonas salmonicida (strain A449) protein is Probable septum site-determining protein MinC.